Consider the following 426-residue polypeptide: Enolase (426 aa).

A (2R)-2-phosphoglycerate-binding site is contributed by Q163. E205 acts as the Proton donor in catalysis. Mg(2+) contacts are provided by D242, E283, and D310. K335, R364, S365, and K386 together coordinate (2R)-2-phosphoglycerate. Residue K335 is the Proton acceptor of the active site.

Belongs to the enolase family. Mg(2+) serves as cofactor.

It localises to the cytoplasm. The protein localises to the secreted. It is found in the cell surface. It catalyses the reaction (2R)-2-phosphoglycerate = phosphoenolpyruvate + H2O. It functions in the pathway carbohydrate degradation; glycolysis; pyruvate from D-glyceraldehyde 3-phosphate: step 4/5. Catalyzes the reversible conversion of 2-phosphoglycerate (2-PG) into phosphoenolpyruvate (PEP). It is essential for the degradation of carbohydrates via glycolysis. This chain is Enolase, found in Pseudarthrobacter chlorophenolicus (strain ATCC 700700 / DSM 12829 / CIP 107037 / JCM 12360 / KCTC 9906 / NCIMB 13794 / A6) (Arthrobacter chlorophenolicus).